Consider the following 276-residue polypeptide: Large ribosomal subunit protein uL2 (276 aa).

A disordered region spans residues 221–276 (RGSVMNPNDHPHGGGEGRAPIGRKAPVTPWGKPTLGLKTRKKKNKSDQYIIRRRKK).

The protein belongs to the universal ribosomal protein uL2 family. In terms of assembly, part of the 50S ribosomal subunit. Forms a bridge to the 30S subunit in the 70S ribosome.

Its function is as follows. One of the primary rRNA binding proteins. Required for association of the 30S and 50S subunits to form the 70S ribosome, for tRNA binding and peptide bond formation. It has been suggested to have peptidyltransferase activity; this is somewhat controversial. Makes several contacts with the 16S rRNA in the 70S ribosome. The chain is Large ribosomal subunit protein uL2 from Brevibacillus brevis (strain 47 / JCM 6285 / NBRC 100599).